The chain runs to 498 residues: Probable malate:quinone oxidoreductase (498 aa).

Belongs to the MQO family. It depends on FAD as a cofactor.

The catalysed reaction is (S)-malate + a quinone = a quinol + oxaloacetate. It participates in carbohydrate metabolism; tricarboxylic acid cycle; oxaloacetate from (S)-malate (quinone route): step 1/1. The chain is Probable malate:quinone oxidoreductase from Prochlorococcus marinus (strain AS9601).